A 609-amino-acid polypeptide reads, in one-letter code: uncharacterized protein (609 aa).

The protein belongs to the NodU/CmcH family.

This is an uncharacterized protein from Methanocaldococcus jannaschii (strain ATCC 43067 / DSM 2661 / JAL-1 / JCM 10045 / NBRC 100440) (Methanococcus jannaschii).